The primary structure comprises 156 residues: Small ribosomal subunit protein uS7 (156 aa).

It belongs to the universal ribosomal protein uS7 family. As to quaternary structure, part of the 30S ribosomal subunit. Contacts proteins S9 and S11.

Functionally, one of the primary rRNA binding proteins, it binds directly to 16S rRNA where it nucleates assembly of the head domain of the 30S subunit. Is located at the subunit interface close to the decoding center, probably blocks exit of the E-site tRNA. The protein is Small ribosomal subunit protein uS7 of Desulfatibacillum aliphaticivorans.